The chain runs to 289 residues: Metal-staphylopine import system permease protein CntC (289 aa).

A run of 5 helical transmembrane segments spans residues 13–33 (AVIA…APLV), 77–97 (LLYV…LGFL), 115–135 (VMLA…FGMG), 194–214 (IAII…GFSF), and 249–269 (IAIV…QIAI). An ABC transmembrane type-1 domain is found at 73-262 (IRPSLLYVFV…IIVMAFNFLS (190 aa)).

The protein belongs to the binding-protein-dependent transport system permease family. In terms of assembly, the complex is composed of two ATP-binding proteins (CntD and CntF), two transmembrane proteins (CntB and CntC) and a solute-binding protein (CntA).

The protein localises to the cell membrane. Nickel/cobalt import is reduced in the presence of zinc. Functionally, part of the ABC transporter complex CntABCDF (Opp1) involved in the uptake of metal in complex with the metallophore staphylopine (StP). Involved in the import of divalent metals ions such as nickel, cobalt and zinc. Probably responsible for the translocation of the substrate across the membrane. Plays a major role in nickel/cobalt import in zinc-depleted conditions. Contributes to virulence. Required for full urease activity in vitro. This chain is Metal-staphylopine import system permease protein CntC, found in Staphylococcus aureus (strain NCTC 8325 / PS 47).